The primary structure comprises 367 residues: Glutamate 5-kinase (367 aa).

Residue K17 participates in ATP binding. Residues S57, D144, and N156 each coordinate substrate. ATP contacts are provided by residues 176–177 (SD) and 217–223 (TGGMTSK). One can recognise a PUA domain in the interval 279–357 (AGALTLDEGA…SELPGELRRP (79 aa)).

This sequence belongs to the glutamate 5-kinase family.

Its subcellular location is the cytoplasm. It carries out the reaction L-glutamate + ATP = L-glutamyl 5-phosphate + ADP. The protein operates within amino-acid biosynthesis; L-proline biosynthesis; L-glutamate 5-semialdehyde from L-glutamate: step 1/2. Its function is as follows. Catalyzes the transfer of a phosphate group to glutamate to form L-glutamate 5-phosphate. The protein is Glutamate 5-kinase of Mycobacterium avium (strain 104).